The primary structure comprises 371 residues: Leucine-rich repeat-containing protein 2 (371 aa).

LRR repeat units lie at residues 122 to 143, 145 to 166, 168 to 189, 191 to 214, 215 to 235, 238 to 260, 261 to 283, 284 to 305, and 308 to 329; these read HLREWYISNTLIQIIPTYIQLF, AMRILDLPKNQISHLPAEIGCL, NLKELNVGFNYLKSIPPELGDC, NLERLDCSGNLELMELPFELSNLK, QVTFVDISANKFSSVPICVLR, NLQWLDISSNNLTDLPQDIDRLE, ELQSFLLYKNKLTYLPYSMLNLK, KLTLLVVSGDHLVELPTALCDS, and PLKFVSLMDNPIDNAQCEDGNE.

The sequence is that of Leucine-rich repeat-containing protein 2 (LRRC2) from Homo sapiens (Human).